The following is a 203-amino-acid chain: Glycerol-3-phosphate acyltransferase (203 aa).

Transmembrane regions (helical) follow at residues 5–25 (IASIALVLLAYLSGSIPFSLL), 50–70 (TCGFSAFALAMGGDMLKGALP), 72–92 (IAAQALGLSPLAVVIVGTAAM), 115–135 (VVLTLAPLVALPGLAAWAVTF), 140–160 (ISAVASLTAAAVCGIAAAVLL), and 162–182 (LGMLPPAYAIFVWGAVAAIVF).

The protein belongs to the PlsY family. In terms of assembly, probably interacts with PlsX.

The protein resides in the cell membrane. The catalysed reaction is an acyl phosphate + sn-glycerol 3-phosphate = a 1-acyl-sn-glycero-3-phosphate + phosphate. It participates in lipid metabolism; phospholipid metabolism. Functionally, catalyzes the transfer of an acyl group from acyl-phosphate (acyl-PO(4)) to glycerol-3-phosphate (G3P) to form lysophosphatidic acid (LPA). This enzyme utilizes acyl-phosphate as fatty acyl donor, but not acyl-CoA or acyl-ACP. The chain is Glycerol-3-phosphate acyltransferase from Roseiflexus sp. (strain RS-1).